The primary structure comprises 251 residues: Triosephosphate isomerase (251 aa).

9 to 11 (NWK) lines the substrate pocket. His-95 acts as the Electrophile in catalysis. Glu-167 acts as the Proton acceptor in catalysis. Residues Gly-173, Ser-213, and 234–235 (GG) each bind substrate.

The protein belongs to the triosephosphate isomerase family. In terms of assembly, homodimer.

It localises to the cytoplasm. It catalyses the reaction D-glyceraldehyde 3-phosphate = dihydroxyacetone phosphate. It participates in carbohydrate biosynthesis; gluconeogenesis. The protein operates within carbohydrate degradation; glycolysis; D-glyceraldehyde 3-phosphate from glycerone phosphate: step 1/1. Involved in the gluconeogenesis. Catalyzes stereospecifically the conversion of dihydroxyacetone phosphate (DHAP) to D-glyceraldehyde-3-phosphate (G3P). This chain is Triosephosphate isomerase, found in Latilactobacillus sakei subsp. sakei (strain 23K) (Lactobacillus sakei subsp. sakei).